Reading from the N-terminus, the 467-residue chain is Asparagine--tRNA ligase (467 aa).

It belongs to the class-II aminoacyl-tRNA synthetase family. In terms of assembly, homodimer.

Its subcellular location is the cytoplasm. It catalyses the reaction tRNA(Asn) + L-asparagine + ATP = L-asparaginyl-tRNA(Asn) + AMP + diphosphate + H(+). The protein is Asparagine--tRNA ligase of Haemophilus influenzae (strain PittGG).